The chain runs to 446 residues: Na(+)-translocating NADH-quinone reductase subunit A (446 aa).

This sequence belongs to the NqrA family. Composed of six subunits; NqrA, NqrB, NqrC, NqrD, NqrE and NqrF.

It catalyses the reaction a ubiquinone + n Na(+)(in) + NADH + H(+) = a ubiquinol + n Na(+)(out) + NAD(+). Functionally, NQR complex catalyzes the reduction of ubiquinone-1 to ubiquinol by two successive reactions, coupled with the transport of Na(+) ions from the cytoplasm to the periplasm. NqrA to NqrE are probably involved in the second step, the conversion of ubisemiquinone to ubiquinol. The chain is Na(+)-translocating NADH-quinone reductase subunit A from Histophilus somni (strain 129Pt) (Haemophilus somnus).